The primary structure comprises 533 residues: CTP synthase (533 aa).

The segment at 1–268 (MGETKYIFVT…DETILQKMGL (268 aa)) is amidoligase domain. Serine 15 is a binding site for CTP. Position 15 (serine 15) interacts with UTP. ATP is bound at residue 16 to 21 (SLGKGI). Tyrosine 56 is an L-glutamine binding site. Aspartate 73 contacts ATP. Mg(2+) contacts are provided by aspartate 73 and glutamate 143. CTP-binding positions include 150-152 (DIE), 189-194 (KTKPTQ), and lysine 225. UTP-binding positions include 189–194 (KTKPTQ) and lysine 225. Residues 301-533 (YVELQDAYKS…VSFIKAAIDK (233 aa)) enclose the Glutamine amidotransferase type-1 domain. Glycine 356 is an L-glutamine binding site. The active-site Nucleophile; for glutamine hydrolysis is the cysteine 383. L-glutamine contacts are provided by residues 384 to 387 (LGMQ), glutamate 407, and arginine 464. Active-site residues include histidine 509 and glutamate 511.

This sequence belongs to the CTP synthase family. In terms of assembly, homotetramer.

It catalyses the reaction UTP + L-glutamine + ATP + H2O = CTP + L-glutamate + ADP + phosphate + 2 H(+). It carries out the reaction L-glutamine + H2O = L-glutamate + NH4(+). The catalysed reaction is UTP + NH4(+) + ATP = CTP + ADP + phosphate + 2 H(+). The protein operates within pyrimidine metabolism; CTP biosynthesis via de novo pathway; CTP from UDP: step 2/2. Allosterically activated by GTP, when glutamine is the substrate; GTP has no effect on the reaction when ammonia is the substrate. The allosteric effector GTP functions by stabilizing the protein conformation that binds the tetrahedral intermediate(s) formed during glutamine hydrolysis. Inhibited by the product CTP, via allosteric rather than competitive inhibition. Catalyzes the ATP-dependent amination of UTP to CTP with either L-glutamine or ammonia as the source of nitrogen. Regulates intracellular CTP levels through interactions with the four ribonucleotide triphosphates. This chain is CTP synthase, found in Bacteroides fragilis (strain YCH46).